Here is a 98-residue protein sequence, read N- to C-terminus: NADH-ubiquinone oxidoreductase chain 4L (98 aa).

Helical transmembrane passes span 1–21 (MSLTYMNMFMAFTISLLGLLM), 29–49 (SLLCLEGMMLSLFVMMTMTIL), and 61–81 (IILLVFAACEAALGLSLLVMV).

This sequence belongs to the complex I subunit 4L family. Core subunit of respiratory chain NADH dehydrogenase (Complex I) which is composed of 45 different subunits.

Its subcellular location is the mitochondrion inner membrane. It carries out the reaction a ubiquinone + NADH + 5 H(+)(in) = a ubiquinol + NAD(+) + 4 H(+)(out). In terms of biological role, core subunit of the mitochondrial membrane respiratory chain NADH dehydrogenase (Complex I) which catalyzes electron transfer from NADH through the respiratory chain, using ubiquinone as an electron acceptor. Part of the enzyme membrane arm which is embedded in the lipid bilayer and involved in proton translocation. The polypeptide is NADH-ubiquinone oxidoreductase chain 4L (MT-ND4L) (Vampyressa brocki (Brock's yellow-eared bat)).